We begin with the raw amino-acid sequence, 402 residues long: LIM homeobox transcription factor 1-beta (402 aa).

LIM zinc-binding domains follow at residues 56–106 and 115–168; these read CEGC…CKQD and CSGC…CKGD. 2 disordered regions span residues 176-229 and 326-346; these read LSSV…LTTQ and PYGS…PGDH. The homeobox DNA-binding region spans 219-278; it reads PKRPRTILTTQQRRAFKASFEVSSKPCRKVRETLAAETGLSVRVVQVWFQNQRAKMKKLA. Over residues 326 to 338 the composition is skewed to polar residues; the sequence is PYGSSDPFQQGLT.

In terms of assembly, interacts with DHX9. Expressed in most tissues. Highest levels in testis, thyroid, duodenum, skeletal muscle, and pancreatic islets.

Its subcellular location is the nucleus. Transcription factor involved in the regulation of podocyte-expressed genes. Essential for the specification of dorsal limb fate at both the zeugopodal and autopodal levels. The protein is LIM homeobox transcription factor 1-beta (LMX1B) of Homo sapiens (Human).